The primary structure comprises 329 residues: DNA-directed RNA polymerase subunit alpha (329 aa).

An alpha N-terminal domain (alpha-NTD) region spans residues Met1–Arg235. Residues Phe249–Asp329 form an alpha C-terminal domain (alpha-CTD) region.

This sequence belongs to the RNA polymerase alpha chain family. As to quaternary structure, homodimer. The RNAP catalytic core consists of 2 alpha, 1 beta, 1 beta' and 1 omega subunit. When a sigma factor is associated with the core the holoenzyme is formed, which can initiate transcription.

The catalysed reaction is RNA(n) + a ribonucleoside 5'-triphosphate = RNA(n+1) + diphosphate. Its function is as follows. DNA-dependent RNA polymerase catalyzes the transcription of DNA into RNA using the four ribonucleoside triphosphates as substrates. This is DNA-directed RNA polymerase subunit alpha from Histophilus somni (strain 129Pt) (Haemophilus somnus).